We begin with the raw amino-acid sequence, 102 residues long: Large ribosomal subunit protein uL23 (102 aa).

Belongs to the universal ribosomal protein uL23 family. In terms of assembly, part of the 50S ribosomal subunit. Contacts protein L29, and trigger factor when it is bound to the ribosome.

Functionally, one of the early assembly proteins it binds 23S rRNA. One of the proteins that surrounds the polypeptide exit tunnel on the outside of the ribosome. Forms the main docking site for trigger factor binding to the ribosome. This chain is Large ribosomal subunit protein uL23, found in Cutibacterium acnes (strain DSM 16379 / KPA171202) (Propionibacterium acnes).